The sequence spans 418 residues: Secreted aspartic protease 5 (418 aa).

An N-terminal signal peptide occupies residues 1-18 (MFLKNILSVLAFALLIDA). Residues 19-76 (APVKRSPGFVTLDFNVKRSLVDPDDPTVEAKRSPLFLEFTPSEFPVDETGRDGDVDKR) constitute a propeptide, activation peptide. Positions 90 to 404 (YTADITVGSD…NLDDKKISMA (315 aa)) constitute a Peptidase A1 domain. Asp108 is an active-site residue. 108–110 (DTG) contacts pepstatin A. A disulfide bridge connects residues Cys123 and Cys135. 161–162 (GD) is a pepstatin A binding site. Glu268 is a Zn(2+) binding site. Residue Asp294 is part of the active site. 294–298 (DSGTT) lines the pepstatin A pocket. A disulfide bridge links Cys332 with Cys370.

Belongs to the peptidase A1 family.

It localises to the secreted. It catalyses the reaction Preferential cleavage at the carboxyl of hydrophobic amino acids, but fails to cleave 15-Leu-|-Tyr-16, 16-Tyr-|-Leu-17 and 24-Phe-|-Phe-25 of insulin B chain. Activates trypsinogen, and degrades keratin.. Inhibited by pepstatin A analogs. Secreted aspartic peptidases (SAPs) are a group of ten acidic hydrolases considered as key virulence factors. These enzymes supply the fungus with nutrient amino acids as well as are able to degrade the selected host's proteins involved in the immune defense. Moreover, acts toward human hemoglobin though limited proteolysis to generate a variety of antimicrobial hemocidins, enabling to compete with the other microorganisms of the same physiological niche using the microbicidal peptides generated from the host protein. The polypeptide is Secreted aspartic protease 5 (Candida albicans (strain SC5314 / ATCC MYA-2876) (Yeast)).